Reading from the N-terminus, the 293-residue chain is 33 kDa chaperonin (293 aa).

Cystine bridges form between cysteine 229–cysteine 231 and cysteine 262–cysteine 265.

The protein belongs to the HSP33 family. In terms of processing, under oxidizing conditions two disulfide bonds are formed involving the reactive cysteines. Under reducing conditions zinc is bound to the reactive cysteines and the protein is inactive.

It is found in the cytoplasm. Functionally, redox regulated molecular chaperone. Protects both thermally unfolding and oxidatively damaged proteins from irreversible aggregation. Plays an important role in the bacterial defense system toward oxidative stress. In Methylobacillus flagellatus (strain ATCC 51484 / DSM 6875 / VKM B-1610 / KT), this protein is 33 kDa chaperonin.